The following is a 438-amino-acid chain: MTAGPMGNKSTSDIDSVLVYKSLSRYLKFSENEEGWWHKTAPLLNKILAAAKYDVHLQYRYLVFYYAACVSALGPYPQRFSSSITRSGLPVEFSVNYQNNSKPIVRIGYEPISHLSGTERDPYNHKTASEIVATLSKIQPDFDPRLFNYFVHQLSVNKAESDVLNGANVEGSEMKSQTAFGFDLVNGEISVKGYAFPAMKCQVSQQSLSQLLKAAINGLKGEFDCAFGLVDEYMERCGGYNQFSFVSWDCVVPAKSRFKVYGVHNDVTWKKIEDIWTLGGQATSGNVTKGLELLKELWTLIDLDEGERGYTGRFDDANDNGSNIQSPMVWNYELRPNNPWPLAKFYFPVHGENDMKIVKGLARFFENRGWTELARSYVQTVSSFFPDRDLNQTQRLVSWISFAYTEKTGVYLSVYYHSSADYLWISESGEKRGQGDGA.

E92 serves as a coordination point for substrate. The dimethylallyl diphosphate site is built by R106, K192, Y194, K259, Y261, Y346, and Y411.

This sequence belongs to the tryptophan dimethylallyltransferase family.

The enzyme catalyses (S)-3-(indol-3-ylmethyl)-6,7,8,8a-tetrahydropyrrolo[1,2-a]pyrazin-1-one + dimethylallyl diphosphate = (S)-3-{[2-(1,1-dimethylallyl)-indol-3-yl]methyl}-6,7,8,8a-tetrahydropyrrolo[1,2-a]pyrazin-1-one + diphosphate. The catalysed reaction is 1-hydroxy-3-(indol-3-ylmethyl)-6H,7H,8H-5lambda(5)-pyrrolo[1,2-a]pyrazine + dimethylallyl diphosphate = 1-hydroxy-3-{[2-(1,1-dimethylallyl)-indol-3-yl]methyl}-6H,7H,8H-5lambda(5)-pyrrolo[1,2-a]pyrazine + diphosphate. It functions in the pathway alkaloid biosynthesis. Prenyltransferase; part of the gene cluster that mediates the biosynthesis of malbrancheamide, a dichlorinated fungal indole alkaloid that belongs to a family of natural products containing a characteristic bicyclo[2.2.2]diazaoctane core. The first step of malbrancheamide biosynthesis involves coupling of L-proline and L-tryptophan by malG, a bimodular NRPS, to produce L-Pro-L-Trp aldehyde through reductive offloading. This compound undergoes spontaneous cyclization and dehydration to give a dienamine which is reverse prenylated at C-2 by malE. The other prenyltransferase present in the cluster, malB, displays modest activity, suggesting that may be a redundant gene in the pathway. Subsequently, a [4+2] Diels-Alder cyclo-addition catalyzed by the bifunctional enzyme malC forms the characteristic bicyclo[2.2.2]diazaoctane ring of premalbrancheamid. Finally, the flavin-dependent halogenase malA catalyzes the iterative dichlorination of the indole ring of premalbrancheamide to yield C-9 monochlorinated malbrancheamide B, C-8 monochlorinated isomalbrancheamide B, and dichlorinated malbrancheamide. MalA is also able to brominate premalbrancheamide at C-9 to yield malbrancheamide C, and, to a lesser extend, at C-8 to yield isomalbrancheamide C. Finally, malA can brominate C-9 monochlorinated malbrancheamide B at C-8 to yield malbrancheamide D, or C-8 monochlorinated isomalbrancheamide B at C-9 to produce isomalbrancheamide D. In Malbranchea aurantiaca, this protein is Prenyltransferase malE.